The following is a 210-amino-acid chain: Cyclin-U1-1 (210 aa).

The protein belongs to the cyclin family. Cyclin U/P subfamily. As to quaternary structure, interacts with CDKA-1. Expressed in roots and flowers. Expressed in the shoot apex, leaf primordia and young leaves.

In Arabidopsis thaliana (Mouse-ear cress), this protein is Cyclin-U1-1 (CYCU1-1).